Consider the following 212-residue polypeptide: uncharacterized protein (212 aa).

3 consecutive Pentapeptide repeat domains span residues 63–102 (VSFR…KMVG), 103–142 (MNVA…ALMQ), and 143–182 (SECS…RFEQ).

This is an uncharacterized protein from Bacillus subtilis (strain 168).